The primary structure comprises 508 residues: Photosystem II CP47 reaction center protein (508 aa).

The next 6 helical transmembrane spans lie at 21 to 36 (AVHI…WAGS), 101 to 115 (IVFS…IWHW), 140 to 156 (GIHL…FGAF), 203 to 218 (IAAG…FHLS), 237 to 252 (VLSS…AFVV), and 457 to 472 (SFAL…HGAR).

The protein belongs to the PsbB/PsbC family. PsbB subfamily. PSII is composed of 1 copy each of membrane proteins PsbA, PsbB, PsbC, PsbD, PsbE, PsbF, PsbH, PsbI, PsbJ, PsbK, PsbL, PsbM, PsbT, PsbX, PsbY, PsbZ, Psb30/Ycf12, at least 3 peripheral proteins of the oxygen-evolving complex and a large number of cofactors. It forms dimeric complexes. It depends on Binds multiple chlorophylls. PSII binds additional chlorophylls, carotenoids and specific lipids. as a cofactor.

The protein resides in the plastid. It is found in the chloroplast thylakoid membrane. Functionally, one of the components of the core complex of photosystem II (PSII). It binds chlorophyll and helps catalyze the primary light-induced photochemical processes of PSII. PSII is a light-driven water:plastoquinone oxidoreductase, using light energy to abstract electrons from H(2)O, generating O(2) and a proton gradient subsequently used for ATP formation. The protein is Photosystem II CP47 reaction center protein of Trachelium caeruleum (Blue throatwort).